The primary structure comprises 205 residues: N-(5'-phosphoribosyl)anthranilate isomerase (205 aa).

Belongs to the TrpF family.

The catalysed reaction is N-(5-phospho-beta-D-ribosyl)anthranilate = 1-(2-carboxyphenylamino)-1-deoxy-D-ribulose 5-phosphate. Its pathway is amino-acid biosynthesis; L-tryptophan biosynthesis; L-tryptophan from chorismate: step 3/5. The protein is N-(5'-phosphoribosyl)anthranilate isomerase of Thermotoga neapolitana (strain ATCC 49049 / DSM 4359 / NBRC 107923 / NS-E).